The sequence spans 255 residues: Probable UDP-N-acetylglucosamine pyrophosphorylase (255 aa).

It catalyses the reaction N-acetyl-alpha-D-glucosamine 1-phosphate + UTP + H(+) = UDP-N-acetyl-alpha-D-glucosamine + diphosphate. The protein operates within nucleotide-sugar biosynthesis; UDP-N-acetyl-alpha-D-glucosamine biosynthesis; UDP-N-acetyl-alpha-D-glucosamine from N-acetyl-alpha-D-glucosamine 1-phosphate: step 1/1. The polypeptide is Probable UDP-N-acetylglucosamine pyrophosphorylase (Acanthamoeba polyphaga (Amoeba)).